The sequence spans 79 residues: Calcium/calmodulin-dependent protein kinase II inhibitor 2 (79 aa).

Residues 43 to 69 (KRPPKLGQIGRAKRVVIEDDRIDEVLK) form an inhibitory domain region.

The protein belongs to the CAMK2N family.

The protein resides in the nucleus. It localises to the cytoplasm. Its subcellular location is the cytosol. Potent and specific cellular inhibitor of CaM-kinase II (CAMK2). Traps Ca(2+)/calmodulin on CAMK2. The polypeptide is Calcium/calmodulin-dependent protein kinase II inhibitor 2 (camk2n2) (Xenopus tropicalis (Western clawed frog)).